Reading from the N-terminus, the 146-residue chain is Calmodulin-like protein 5 (146 aa).

Ala-2 bears the N-acetylalanine mark. 4 EF-hand domains span residues 8–43 (EEEA…TGKN), 44–74 (LSEA…TAAK), 78–113 (AGLE…LGQP), and 114–146 (LPQE…LAQE). Ca(2+) is bound by residues Asp-21, Asp-23, Asn-25, Thr-27, Glu-32, Asp-57, Asp-59, Asp-61, Glu-63, Glu-68, Asp-91, Asp-93, Asp-95, His-97, Glu-102, Asp-127, Asp-129, Asp-131, Arg-133, and Glu-138.

In terms of assembly, associates with transglutaminase 3. In terms of tissue distribution, particularly abundant in the epidermis where its expression is directly related to keratinocyte differentiation. Very low expression in lung.

Binds calcium. May be involved in terminal differentiation of keratinocytes. This Homo sapiens (Human) protein is Calmodulin-like protein 5 (CALML5).